The primary structure comprises 246 residues: Chaperone protein SefB (246 aa).

The signal sequence occupies residues 1–24 (MYILNKFIRRTVIFFFFCYLPIAS). Cysteine 124 and cysteine 155 form a disulfide bridge.

The protein belongs to the periplasmic pilus chaperone family.

Its subcellular location is the periplasm. In terms of biological role, required for the biogenesis of the SefA (SEF14) fimbria. In Salmonella enteritidis, this protein is Chaperone protein SefB (sefB).